A 214-amino-acid polypeptide reads, in one-letter code: MNIFRILGDVSHLLAIIILLLKMWKSKSCAGISGKSQLLFALVFTTRYLDLFTVFISPYNTVMKIIFLACAYVTVYLIYGKLRKSYDSENDTFRLEFLLVPVIGLSFLENYEFTPLEILWTFSIYLESVAILPQLFMISKTGEAESITTHYLFFLGLYRVLYLANWIWRYHTEKFYDQIAVVSGVVQTIFYFDFFYLYVTKVLKGKKLSLPMPV.

Residues Met1–Phe4 lie on the Lumenal side of the membrane. Residues Arg5–Trp24 traverse the membrane as a helical segment. The Cytoplasmic segment spans residues Lys25–Ile32. The helical transmembrane segment at Ser33–Phe52 threads the bilayer. Positions Arg47 to Tyr48 are interaction with the K-D-E-L motif on target proteins. At Thr53 to Pro58 the chain is on the lumenal side. Residues Tyr59–Tyr79 traverse the membrane as a helical segment. Residues Gly80 to Thr92 lie on the Cytoplasmic side of the membrane. A helical membrane pass occupies residues Phe93–Asn110. The Lumenal segment spans residues Tyr111–Leu116. The chain crosses the membrane as a helical span at residues Glu117–Leu135. The Cytoplasmic segment spans residues Phe136 to Thr149. A helical membrane pass occupies residues His150–Trp168. The interaction with the K-D-E-L motif on target proteins stretch occupies residues Arg159–Arg169. Over Arg169 to Gln178 the chain is Lumenal. Residues Ile179–Val199 traverse the membrane as a helical segment. Over Thr200–Val214 the chain is Cytoplasmic. The important for recycling of cargo proteins with the sequence motif K-D-E-L from the Golgi to the endoplasmic reticulum stretch occupies residues Lys204–Lys207.

This sequence belongs to the ERD2 family.

It localises to the endoplasmic reticulum membrane. It is found in the golgi apparatus membrane. The protein localises to the cytoplasmic vesicle. Its subcellular location is the COPI-coated vesicle membrane. In terms of biological role, receptor for the C-terminal sequence motif K-D-E-L that is present on endoplasmic reticulum resident proteins and that mediates their recycling from the Golgi back to the endoplasmic reticulum. This is ER lumen protein-retaining receptor 3 (kdelr3) from Xenopus laevis (African clawed frog).